We begin with the raw amino-acid sequence, 316 residues long: F-box protein At4g09920 (316 aa).

One can recognise an F-box domain in the interval 1-47 (MDRIIGLPDEVLVKILSFVPTKVAVSTSILSKRWEFLWMWLTKLKFG).

This is F-box protein At4g09920 from Arabidopsis thaliana (Mouse-ear cress).